Reading from the N-terminus, the 255-residue chain is tRNA (guanine-N(1)-)-methyltransferase (255 aa).

Residues Gly117 and 137 to 142 (LGDFVL) each bind S-adenosyl-L-methionine.

The protein belongs to the RNA methyltransferase TrmD family. As to quaternary structure, homodimer.

The protein localises to the cytoplasm. It carries out the reaction guanosine(37) in tRNA + S-adenosyl-L-methionine = N(1)-methylguanosine(37) in tRNA + S-adenosyl-L-homocysteine + H(+). Specifically methylates guanosine-37 in various tRNAs. The protein is tRNA (guanine-N(1)-)-methyltransferase of Paracidovorax citrulli (strain AAC00-1) (Acidovorax citrulli).